Reading from the N-terminus, the 132-residue chain is Large ribosomal subunit protein bL12 (132 aa).

A compositionally biased stretch (basic and acidic residues) spans 102–126; the sequence is APKPIKEATNKDDAESIKKQLEEAG. The tract at residues 102–132 is disordered; sequence APKPIKEATNKDDAESIKKQLEEAGAKASVK.

This sequence belongs to the bacterial ribosomal protein bL12 family. Homodimer. Part of the ribosomal stalk of the 50S ribosomal subunit. Forms a multimeric L10(L12)X complex, where L10 forms an elongated spine to which 2 to 4 L12 dimers bind in a sequential fashion. Binds GTP-bound translation factors.

In terms of biological role, forms part of the ribosomal stalk which helps the ribosome interact with GTP-bound translation factors. Is thus essential for accurate translation. This chain is Large ribosomal subunit protein bL12, found in Rippkaea orientalis (strain PCC 8801 / RF-1) (Cyanothece sp. (strain PCC 8801)).